The following is a 312-amino-acid chain: HPr kinase/phosphorylase (312 aa).

Catalysis depends on residues histidine 139 and lysine 160. 154-161 (GSSGVGKS) provides a ligand contact to ATP. Serine 161 is a binding site for Mg(2+). Aspartate 178 serves as the catalytic Proton acceptor; for phosphorylation activity. Proton donor; for dephosphorylation activity. The tract at residues 202–211 (LEIRGLGIIN) is important for the catalytic mechanism of both phosphorylation and dephosphorylation. Residue glutamate 203 participates in Mg(2+) binding. Residue arginine 244 is part of the active site. The segment at 265-270 (PVRPGR) is important for the catalytic mechanism of dephosphorylation.

The protein belongs to the HPrK/P family. In terms of assembly, homohexamer. The cofactor is Mg(2+).

It carries out the reaction [HPr protein]-L-serine + ATP = [HPr protein]-O-phospho-L-serine + ADP + H(+). The catalysed reaction is [HPr protein]-O-phospho-L-serine + phosphate + H(+) = [HPr protein]-L-serine + diphosphate. In terms of biological role, catalyzes the ATP- as well as the pyrophosphate-dependent phosphorylation of a specific serine residue in HPr, a phosphocarrier protein of the phosphoenolpyruvate-dependent sugar phosphotransferase system (PTS). HprK/P also catalyzes the pyrophosphate-producing, inorganic phosphate-dependent dephosphorylation (phosphorolysis) of seryl-phosphorylated HPr (P-Ser-HPr). The two antagonistic activities of HprK/P are regulated by several intracellular metabolites, which change their concentration in response to the absence or presence of rapidly metabolisable carbon sources (glucose, fructose, etc.) in the growth medium. Therefore, by controlling the phosphorylation state of HPr, HPrK/P is a sensor enzyme that plays a major role in the regulation of carbon metabolism and sugar transport: it mediates carbon catabolite repression (CCR), and regulates PTS-catalyzed carbohydrate uptake and inducer exclusion. The protein is HPr kinase/phosphorylase of Listeria monocytogenes serotype 4b (strain CLIP80459).